Consider the following 138-residue polypeptide: Protein NrdI (138 aa).

This sequence belongs to the NrdI family.

Its function is as follows. Probably involved in ribonucleotide reductase function. The polypeptide is Protein NrdI (Paracoccus denitrificans (strain Pd 1222)).